Consider the following 272-residue polypeptide: Rhomboid-type serine protease B (272 aa).

The next 5 membrane-spanning stretches (helical) occupy residues 30–50 (IVLL…WSVV), 72–92 (PFIH…TPLL), 103–123 (TAVA…YILV), 133–153 (AVVG…IKTF), and 164–184 (TKIP…IFVP). The Nucleophile role is filled by S138. N-linked (GlcNAc...) asparagine glycosylation is present at N185. The helical transmembrane segment at 186–206 (TSFLGHLSAIIIGYLLGLGYL) threads the bilayer. H191 is an active-site residue.

It belongs to the peptidase S54 family.

The protein localises to the membrane. The enzyme catalyses Cleaves type-1 transmembrane domains using a catalytic dyad composed of serine and histidine that are contributed by different transmembrane domains.. Its function is as follows. Rhomboid protease that catalyzes intramembrane proteolysis. Required for transcription factor srbA activation by mediating its release from the membrane and thereby regulating its activity under hypoxic conditions. Essential for iron homeostasis and resistance to azoles such as voriconazole. Required for virulence in murine models of invasive pulmonary aspergillosis (IPA). The polypeptide is Rhomboid-type serine protease B (Aspergillus fumigatus (strain CBS 144.89 / FGSC A1163 / CEA10) (Neosartorya fumigata)).